The primary structure comprises 228 residues: Ribosomal RNA large subunit methyltransferase E (228 aa).

S-adenosyl-L-methionine-binding residues include glycine 76, tryptophan 78, aspartate 99, aspartate 115, and aspartate 139. Lysine 179 functions as the Proton acceptor in the catalytic mechanism.

The protein belongs to the class I-like SAM-binding methyltransferase superfamily. RNA methyltransferase RlmE family.

Its subcellular location is the cytoplasm. It catalyses the reaction uridine(2552) in 23S rRNA + S-adenosyl-L-methionine = 2'-O-methyluridine(2552) in 23S rRNA + S-adenosyl-L-homocysteine + H(+). Specifically methylates the uridine in position 2552 of 23S rRNA at the 2'-O position of the ribose in the fully assembled 50S ribosomal subunit. The chain is Ribosomal RNA large subunit methyltransferase E from Nitrobacter hamburgensis (strain DSM 10229 / NCIMB 13809 / X14).